Consider the following 435-residue polypeptide: tRNA modification GTPase MnmE (435 aa).

(6S)-5-formyl-5,6,7,8-tetrahydrofolate is bound by residues Arg-20, Glu-77, and Lys-117. A TrmE-type G domain is found at 214-359 (GIKVVIVGVP…FLKEIESFCL (146 aa)). Residues 224–229 (NSGKSS), 243–249 (TEEEGTT), and 268–271 (DTAG) each bind GTP. Residues Ser-228 and Thr-249 each contribute to the Mg(2+) site. Lys-435 serves as a coordination point for (6S)-5-formyl-5,6,7,8-tetrahydrofolate.

It belongs to the TRAFAC class TrmE-Era-EngA-EngB-Septin-like GTPase superfamily. TrmE GTPase family. Homodimer. Heterotetramer of two MnmE and two MnmG subunits. Requires K(+) as cofactor.

The protein localises to the cytoplasm. Exhibits a very high intrinsic GTPase hydrolysis rate. Involved in the addition of a carboxymethylaminomethyl (cmnm) group at the wobble position (U34) of certain tRNAs, forming tRNA-cmnm(5)s(2)U34. The chain is tRNA modification GTPase MnmE from Bartonella bacilliformis (strain ATCC 35685 / KC583 / Herrer 020/F12,63).